A 361-amino-acid chain; its full sequence is Molybdopterin synthase catalytic subunit (361 aa).

Residues H101 to R102, K117, and K124 to E126 each bind substrate.

This sequence belongs to the MoaE family. MOCS2B subfamily. In terms of assembly, heterotetramer; composed of 2 small (Mocs2A) and 2 large (Mocs2B) subunits.

It is found in the cytoplasm. The enzyme catalyses 2 [molybdopterin-synthase sulfur-carrier protein]-C-terminal-Gly-aminoethanethioate + cyclic pyranopterin phosphate + H2O = molybdopterin + 2 [molybdopterin-synthase sulfur-carrier protein]-C-terminal Gly-Gly + 2 H(+). Its pathway is cofactor biosynthesis; molybdopterin biosynthesis. Catalytic subunit of the molybdopterin synthase complex, a complex that catalyzes the conversion of precursor Z into molybdopterin. Acts by mediating the incorporation of 2 sulfur atoms from thiocarboxylated Mocs2A into precursor Z to generate a dithiolene group. The sequence is that of Molybdopterin synthase catalytic subunit from Drosophila pseudoobscura pseudoobscura (Fruit fly).